The primary structure comprises 542 residues: MSFRFNKGAFEDNSFNEQIREALTSALNSKTQSSSQTAPANTTNSAATDEVKQETRGPKRLDILKSGISVSKVNFPSTPQLEILDLDVSAQSRSLLKGICKVSCKNAMLEINTEIEANLLLLYTNDGPSFTTPRLISNDSFTVPITMTFNQIELEAITNIFVKNNSVGISFNDVNLDFDFDCSIKLLQSSIEKRLKGSMETVFKEVLPSVIFSMSQRWFTHGESTCNSASDDKSAGRQVENHSHTPRTILEDCDLEDLSPANMLRLSTLVSSRQSLSLNPTAMNTLSTIPGCLERQNLHRFNSRIPALSNFYPDFYEVESPHLKAFGRSVSTNVISSGKLEHHNALPQRVLDERSYDLKTIASVQSRIFERSSGDGTAIRRRKIKMGKKSKSKKAQSQDIENSSPTVVMPSSPSLEPSAVSTPEALHSPQPTTAVQSPELLAENSESVSIPALILPTQADHYTLPVKTSAPKLNLLEEAHYLNRKREFQKLRTSLYSPIRSNRFNLNKEMERPILEHKGLNFVGLTHGLNWGSEDLPPPYRG.

Residues 1 to 216 (MSFRFNKGAF…LPSVIFSMSQ (216 aa)) form the SMP-LTD domain. Disordered regions lie at residues 27–58 (LNSK…TRGP) and 372–435 (SSGD…TTAV). The span at 31 to 48 (TQSSSQTAPANTTNSAAT) shows a compositional bias: low complexity. The segment covering 49–58 (DEVKQETRGP) has biased composition (basic and acidic residues). Residues 379–394 (IRRRKIKMGKKSKSKK) are compositionally biased toward basic residues. Over residues 403–414 (SSPTVVMPSSPS) the composition is skewed to low complexity.

The protein belongs to the MDM34 family. As to quaternary structure, component of the ER-mitochondria encounter structure (ERMES) or MDM complex, composed of MMM1, MDM10, MDM12 and MDM34.

The protein localises to the mitochondrion outer membrane. In terms of biological role, component of the ERMES/MDM complex, which serves as a molecular tether to connect the endoplasmic reticulum (ER) and mitochondria. Components of this complex are involved in the control of mitochondrial shape and protein biogenesis, and function in nonvesicular lipid trafficking between the ER and mitochondria. MDM34 is required for the interaction of the ER-resident membrane protein MMM1 and the outer mitochondrial membrane-resident beta-barrel protein MDM10. In Lachancea thermotolerans (strain ATCC 56472 / CBS 6340 / NRRL Y-8284) (Yeast), this protein is Mitochondrial distribution and morphology protein 34.